We begin with the raw amino-acid sequence, 417 residues long: RH-like protein (417 aa).

The next 11 membrane-spanning stretches (helical) occupy residues 12 to 32 (CLPL…FFFT), 44 to 64 (LVAS…GLGF), 77 to 97 (VAFN…LDGF), 125 to 145 (ISMN…MELV), 172 to 192 (IHVF…KPLP), 203 to 223 (TSPS…WPTF), 238 to 258 (VFST…VSSL), 265 to 285 (INMT…GASC), 287 to 307 (VIHS…ISFG), 331 to 351 (TFGL…ALRV), and 358 to 378 (MIGF…AMSI).

This sequence belongs to the ammonium transporter (TC 2.A.49) family. Rh subfamily.

The protein resides in the membrane. In terms of biological role, may be part of an oligomeric complex which is likely to have a transport or channel function in the erythrocyte membrane. The protein is RH-like protein of Macaca fascicularis (Crab-eating macaque).